A 453-amino-acid chain; its full sequence is Homogentisate 1,2-dioxygenase (453 aa).

Residues 1–12 (MLEKAERQRKAA) are compositionally biased toward basic and acidic residues. A disordered region spans residues 1–43 (MLEKAERQRKAAPDQQRSAGYMPGFGNDFETESLPGSLPQGQN). Catalysis depends on His-306, which acts as the Proton acceptor. Positions 349 and 355 each coordinate Fe cation. Positions 364 and 385 each coordinate homogentisate. Fe cation is bound at residue His-385.

It belongs to the homogentisate dioxygenase family. Hexamer; dimer of trimers. The cofactor is Fe cation.

The enzyme catalyses homogentisate + O2 = 4-maleylacetoacetate + H(+). Its pathway is amino-acid degradation; L-phenylalanine degradation; acetoacetate and fumarate from L-phenylalanine: step 4/6. Its function is as follows. Involved in the catabolism of homogentisate (2,5-dihydroxyphenylacetate or 2,5-OH-PhAc), a central intermediate in the degradation of phenylalanine and tyrosine. Catalyzes the oxidative ring cleavage of the aromatic ring of homogentisate to yield maleylacetoacetate. The sequence is that of Homogentisate 1,2-dioxygenase from Sinorhizobium medicae (strain WSM419) (Ensifer medicae).